A 181-amino-acid polypeptide reads, in one-letter code: Acireductone dioxygenase (181 aa).

The Fe(2+) site is built by His-97, His-99, Glu-103, and His-141. Residues His-97, His-99, Glu-103, and His-141 each contribute to the Ni(2+) site.

It belongs to the acireductone dioxygenase (ARD) family. Monomer. Requires Fe(2+) as cofactor. The cofactor is Ni(2+).

It catalyses the reaction 1,2-dihydroxy-5-(methylsulfanyl)pent-1-en-3-one + O2 = 3-(methylsulfanyl)propanoate + CO + formate + 2 H(+). The catalysed reaction is 1,2-dihydroxy-5-(methylsulfanyl)pent-1-en-3-one + O2 = 4-methylsulfanyl-2-oxobutanoate + formate + 2 H(+). It participates in amino-acid biosynthesis; L-methionine biosynthesis via salvage pathway; L-methionine from S-methyl-5-thio-alpha-D-ribose 1-phosphate: step 5/6. Its function is as follows. Catalyzes 2 different reactions between oxygen and the acireductone 1,2-dihydroxy-3-keto-5-methylthiopentene (DHK-MTPene) depending upon the metal bound in the active site. Fe-containing acireductone dioxygenase (Fe-ARD) produces formate and 2-keto-4-methylthiobutyrate (KMTB), the alpha-ketoacid precursor of methionine in the methionine recycle pathway. Ni-containing acireductone dioxygenase (Ni-ARD) produces methylthiopropionate, carbon monoxide and formate, and does not lie on the methionine recycle pathway. The polypeptide is Acireductone dioxygenase (Pseudomonas fluorescens (strain Pf0-1)).